We begin with the raw amino-acid sequence, 459 residues long: Probable 1,4-beta-D-glucan cellobiohydrolase C (459 aa).

A signal peptide spans 1 to 18 (MHYPLSLALAFLPFGIQA). The CBM1 domain maps to 19–54 (QQTLWGQCGGQGYSGATSCVAGATCATVNEYYAQCT). 2 cysteine pairs are disulfide-bonded: cysteine 26-cysteine 43 and cysteine 37-cysteine 53. The segment at 54 to 94 (TPAAGTSSATTLKTTTSSTTAAVTTTTTTQSPTGSASPTTT) is thr-rich linker. Residues 76–97 (VTTTTTTQSPTGSASPTTTASA) form a disordered region. Residues 95–459 (ASASGNPFSG…QLLTNANPAF (365 aa)) form a catalytic region. Residue aspartate 189 is part of the active site. Cysteine 190 and cysteine 249 form a disulfide bridge. Aspartate 235 functions as the Proton donor in the catalytic mechanism. An N-linked (GlcNAc...) asparagine glycan is attached at asparagine 303. Residues cysteine 381 and cysteine 428 are joined by a disulfide bond. Aspartate 414 functions as the Nucleophile in the catalytic mechanism.

It belongs to the glycosyl hydrolase 6 (cellulase B) family.

It is found in the secreted. It carries out the reaction Hydrolysis of (1-&gt;4)-beta-D-glucosidic linkages in cellulose and cellotetraose, releasing cellobiose from the non-reducing ends of the chains.. The biological conversion of cellulose to glucose generally requires three types of hydrolytic enzymes: (1) Endoglucanases which cut internal beta-1,4-glucosidic bonds; (2) Exocellobiohydrolases that cut the disaccharide cellobiose from the non-reducing end of the cellulose polymer chain; (3) Beta-1,4-glucosidases which hydrolyze the cellobiose and other short cello-oligosaccharides to glucose. This is Probable 1,4-beta-D-glucan cellobiohydrolase C (cbhC) from Aspergillus niger (strain ATCC MYA-4892 / CBS 513.88 / FGSC A1513).